The chain runs to 177 residues: Adenine phosphoribosyltransferase (177 aa).

It belongs to the purine/pyrimidine phosphoribosyltransferase family. As to quaternary structure, homodimer.

It localises to the cytoplasm. The enzyme catalyses AMP + diphosphate = 5-phospho-alpha-D-ribose 1-diphosphate + adenine. It participates in purine metabolism; AMP biosynthesis via salvage pathway; AMP from adenine: step 1/1. Catalyzes a salvage reaction resulting in the formation of AMP, that is energically less costly than de novo synthesis. This Anaeromyxobacter sp. (strain Fw109-5) protein is Adenine phosphoribosyltransferase.